We begin with the raw amino-acid sequence, 528 residues long: Bifunctional pantoate ligase/cytidylate kinase (528 aa).

Residues Met-1–Ile-293 form a pantoate--beta-alanine ligase region. Position 34-41 (Met-34–His-41) interacts with ATP. The active-site Proton donor is the His-41. Position 65 (Gln-65) interacts with (R)-pantoate. Gln-65 is a beta-alanine binding site. Gly-160–Asp-163 provides a ligand contact to ATP. A (R)-pantoate-binding site is contributed by Gln-166. ATP-binding positions include Ile-189 and Ile-197–Arg-200. The interval Leu-294–Ile-528 is cytidylate kinase.

This sequence in the N-terminal section; belongs to the pantothenate synthetase family. In the C-terminal section; belongs to the cytidylate kinase family. Type 1 subfamily.

It localises to the cytoplasm. The enzyme catalyses (R)-pantoate + beta-alanine + ATP = (R)-pantothenate + AMP + diphosphate + H(+). The catalysed reaction is CMP + ATP = CDP + ADP. It carries out the reaction dCMP + ATP = dCDP + ADP. It functions in the pathway cofactor biosynthesis; (R)-pantothenate biosynthesis; (R)-pantothenate from (R)-pantoate and beta-alanine: step 1/1. Catalyzes the condensation of pantoate with beta-alanine in an ATP-dependent reaction via a pantoyl-adenylate intermediate. Its function is as follows. Catalyzes the transfer of a phosphate group from ATP to either CMP or dCMP to form CDP or dCDP and ADP, respectively. In Trichodesmium erythraeum (strain IMS101), this protein is Bifunctional pantoate ligase/cytidylate kinase.